The chain runs to 106 residues: Small ribosomal subunit protein uS10 (106 aa).

It belongs to the universal ribosomal protein uS10 family. As to quaternary structure, part of the 30S ribosomal subunit.

Functionally, involved in the binding of tRNA to the ribosomes. In Prochlorococcus marinus (strain MIT 9303), this protein is Small ribosomal subunit protein uS10.